Here is a 509-residue protein sequence, read N- to C-terminus: 2-isopropylmalate synthase (509 aa).

The Pyruvate carboxyltransferase domain maps to isoleucine 5–lysine 267. Residues aspartate 14, histidine 202, histidine 204, and asparagine 238 each coordinate Mn(2+). Residues lysine 391–asparagine 509 are regulatory domain.

The protein belongs to the alpha-IPM synthase/homocitrate synthase family. LeuA type 1 subfamily. As to quaternary structure, homodimer. Mn(2+) serves as cofactor.

The protein localises to the cytoplasm. It carries out the reaction 3-methyl-2-oxobutanoate + acetyl-CoA + H2O = (2S)-2-isopropylmalate + CoA + H(+). Its pathway is amino-acid biosynthesis; L-leucine biosynthesis; L-leucine from 3-methyl-2-oxobutanoate: step 1/4. Functionally, catalyzes the condensation of the acetyl group of acetyl-CoA with 3-methyl-2-oxobutanoate (2-ketoisovalerate) to form 3-carboxy-3-hydroxy-4-methylpentanoate (2-isopropylmalate). This is 2-isopropylmalate synthase from Staphylococcus aureus (strain MRSA252).